We begin with the raw amino-acid sequence, 224 residues long: MDVMKGTTTVGLICDDAVILATDKRASLGNLVADKEAKKLYKIDDYIAMTIAGSVGDAQAIVRLLIAEAKLYKMRTGRNIPPLACATLLSNILHSSRMFPFLTQIIIGGYDLLEGAKLFSLDPLGGMNEEKTFTATGSGSPIAYGVLEAGYDRDMSVEEGIKLALNALKSAMERDTFSGNGISLAVITKDGVKIFEDEEIEKILDSMKAKPKKKTTKRSRRKSK.

A propeptide spans 1–6 (removed in mature form; by autocatalysis); that stretch reads MDVMKG. Thr7 (nucleophile) is an active-site residue.

It belongs to the peptidase T1B family. In terms of assembly, the 20S proteasome core is composed of 14 alpha and 14 beta subunits that assemble into four stacked heptameric rings, resulting in a barrel-shaped structure. The two inner rings, each composed of seven catalytic beta subunits, are sandwiched by two outer rings, each composed of seven alpha subunits. The catalytic chamber with the active sites is on the inside of the barrel. Has a gated structure, the ends of the cylinder being occluded by the N-termini of the alpha-subunits. Is capped at one or both ends by the proteasome regulatory ATPase, PAN.

Its subcellular location is the cytoplasm. The enzyme catalyses Cleavage of peptide bonds with very broad specificity.. The formation of the proteasomal ATPase PAN-20S proteasome complex, via the docking of the C-termini of PAN into the intersubunit pockets in the alpha-rings, triggers opening of the gate for substrate entry. Interconversion between the open-gate and close-gate conformations leads to a dynamic regulation of the 20S proteasome proteolysis activity. Component of the proteasome core, a large protease complex with broad specificity involved in protein degradation. The M.jannaschii proteasome is able to cleave oligopeptides after Glu, Asp, Tyr, Phe, Trp, slightly after Arg, but not after Ala. Thus, displays caspase-like and chymotrypsin-like activities and low level of trypsin-like activity. The sequence is that of Proteasome subunit beta from Methanocaldococcus jannaschii (strain ATCC 43067 / DSM 2661 / JAL-1 / JCM 10045 / NBRC 100440) (Methanococcus jannaschii).